The chain runs to 151 residues: Deoxyuridine 5'-triphosphate nucleotidohydrolase (151 aa).

Substrate contacts are provided by residues 70–72 (RSG), N83, 87–89 (LID), and M97.

This sequence belongs to the dUTPase family. It depends on Mg(2+) as a cofactor.

It catalyses the reaction dUTP + H2O = dUMP + diphosphate + H(+). Its pathway is pyrimidine metabolism; dUMP biosynthesis; dUMP from dCTP (dUTP route): step 2/2. Functionally, this enzyme is involved in nucleotide metabolism: it produces dUMP, the immediate precursor of thymidine nucleotides and it decreases the intracellular concentration of dUTP so that uracil cannot be incorporated into DNA. The chain is Deoxyuridine 5'-triphosphate nucleotidohydrolase from Pasteurella multocida (strain Pm70).